A 352-amino-acid polypeptide reads, in one-letter code: Histidine protein kinase SaeS (352 aa).

2 helical membrane passes run 9–29 (QIII…VIAY) and 41–61 (TLAI…SIFI). One can recognise a Histidine kinase domain in the interval 130-349 (NLAHDLKTPL…TMTLTLKKFQ (220 aa)). The residue at position 133 (histidine 133) is a Phosphohistidine; by autocatalysis.

Post-translationally, autophosphorylated.

Its subcellular location is the cell membrane. The catalysed reaction is ATP + protein L-histidine = ADP + protein N-phospho-L-histidine.. Its function is as follows. Member of the two-component regulatory system SaeR/SaeS. Probably functions as a membrane-associated protein kinase that upon sensing the appropriate signal, autophosphorylates and in turn activates the cytosolic response regulator SaeR. The sequence is that of Histidine protein kinase SaeS (saeS) from Staphylococcus epidermidis (strain ATCC 35984 / DSM 28319 / BCRC 17069 / CCUG 31568 / BM 3577 / RP62A).